Reading from the N-terminus, the 331-residue chain is CMRF35-like molecule 9 (331 aa).

Positions 1–18 are cleaved as a signal peptide; sequence MRPLVLLWGCLVLPGYEA. Positions 19-120 constitute an Ig-like V-type domain; that stretch reads LKGPKEISGF…LGRDESFEVT (102 aa). The Extracellular segment spans residues 19-204; the sequence is LKGPKEISGF…KPSVSIPMVR (186 aa). Cysteine 37 and cysteine 106 are disulfide-bonded. The O-linked (GalNAc...) threonine glycan is linked to threonine 136. A glycan (O-linked (GalNAc...) serine) is linked at serine 140. Threonine 143 is a glycosylation site (O-linked (GalNAc...) threonine). O-linked (GalNAc...) serine glycosylation occurs at serine 145. O-linked (GalNAc...) threonine glycans are attached at residues threonine 150 and threonine 152. Serine 154 is a glycosylation site (O-linked (GalNAc...) serine). O-linked (GalNAc...) threonine glycans are attached at residues threonine 164, threonine 181, and threonine 182. O-linked (GalNAc...) serine glycosylation is present at serine 186. The helical transmembrane segment at 205-225 threads the bilayer; sequence MMAPVLILLSLLLAAGLIAFG. Over 226–331 the chain is Cytoplasmic; it reads SHMLRWRKKA…ELAFSEFISV (106 aa). A compositionally biased stretch (polar residues) spans 278-293; the sequence is NPSAVPSPETQNLSQS. The disordered stretch occupies residues 278–318; it reads NPSAVPSPETQNLSQSTEEEEAARSLDDDKEDVMAPPPLQM.

Belongs to the CD300 family. O-glycosylated with sialylated oligosaccharides. As to expression, expressed in monocyte cell lines. Expressed in certain types of endothelial and myeloid lineage cells. Expressed in mesenteric lymph nodes (LNs), spleen, thymus, lung, heart and kidney. Expressed in high endothelial venules (HEVs) in peripheral and mesenteric LNs (at protein level). Highly expressed in heart. Slightly expressed in spleen and thymus. Isoform 5 is expressed preferentially in heart. Isoform 1 is expressed predominantly in kidney and liver.

It is found in the apical cell membrane. The protein resides in the basolateral cell membrane. The protein localises to the endosome. Its subcellular location is the multivesicular body membrane. Functionally, receptor which may mediate L-selectin-dependent lymphocyte rollings. Binds SELL in a calcium dependent manner. Binds lymphocyte. The chain is CMRF35-like molecule 9 (Cd300lg) from Mus musculus (Mouse).